Here is a 224-residue protein sequence, read N- to C-terminus: PKHD-type hydroxylase HNE_1625 (224 aa).

The 99-residue stretch at 77-175 (KFAPPLISCS…RFVFVGWIQS (99 aa)) folds into the Fe2OG dioxygenase domain. Residues His-95, Asp-97, and His-156 each contribute to the Fe cation site. Arg-166 is a 2-oxoglutarate binding site.

Requires Fe(2+) as cofactor. L-ascorbate is required as a cofactor.

This Hyphomonas neptunium (strain ATCC 15444) protein is PKHD-type hydroxylase HNE_1625.